A 323-amino-acid chain; its full sequence is GTP 3',8-cyclase (323 aa).

In terms of domain architecture, Radical SAM core spans 4–233 (KYGREIDYLR…NGPAKYISIE (230 aa)). Position 13 (Arg-13) interacts with GTP. [4Fe-4S] cluster contacts are provided by Cys-20 and Cys-24. Tyr-26 serves as a coordination point for S-adenosyl-L-methionine. Position 27 (Cys-27) interacts with [4Fe-4S] cluster. Arg-63 serves as a coordination point for GTP. Gly-67 contributes to the S-adenosyl-L-methionine binding site. Thr-94 contributes to the GTP binding site. Ser-118 lines the S-adenosyl-L-methionine pocket. Lys-154 lines the GTP pocket. Residue Met-188 participates in S-adenosyl-L-methionine binding. Cys-250 and Cys-253 together coordinate [4Fe-4S] cluster. A GTP-binding site is contributed by 255–257 (RIR). Cys-267 is a [4Fe-4S] cluster binding site.

Belongs to the radical SAM superfamily. MoaA family. As to quaternary structure, monomer and homodimer. The cofactor is [4Fe-4S] cluster.

The enzyme catalyses GTP + AH2 + S-adenosyl-L-methionine = (8S)-3',8-cyclo-7,8-dihydroguanosine 5'-triphosphate + 5'-deoxyadenosine + L-methionine + A + H(+). The protein operates within cofactor biosynthesis; molybdopterin biosynthesis. Functionally, catalyzes the cyclization of GTP to (8S)-3',8-cyclo-7,8-dihydroguanosine 5'-triphosphate. This is GTP 3',8-cyclase from Clostridium perfringens (strain SM101 / Type A).